Here is a 647-residue protein sequence, read N- to C-terminus: Nucleolar GTP-binding protein 1 (647 aa).

Residues 168–340 (RTLLICGYPN…VRNKACEKLL (173 aa)) enclose the OBG-type G domain. GTP contacts are provided by residues 174 to 181 (GYPNVGKS), 220 to 224 (DTPGI), and 288 to 291 (NKTD). Ser563 bears the Phosphoserine mark. The tract at residues 594-647 (ADGSMRSKADRMAKMERRERNRHAKQGESDRHNAVSLSKHLFSGKRGVGKTDFR) is disordered. Over residues 598-626 (MRSKADRMAKMERRERNRHAKQGESDRHN) the composition is skewed to basic and acidic residues.

It belongs to the TRAFAC class OBG-HflX-like GTPase superfamily. OBG GTPase family. NOG subfamily. As to quaternary structure, associated with nucleolar and cytoplasmic pre-60S particles. Directly interacts with RLP24.

It localises to the nucleus. It is found in the nucleolus. Functionally, involved in the biogenesis of the 60S ribosomal subunit. The protein is Nucleolar GTP-binding protein 1 (NOG1) of Saccharomyces cerevisiae (strain ATCC 204508 / S288c) (Baker's yeast).